We begin with the raw amino-acid sequence, 476 residues long: Bifunctional protein HldE (476 aa).

The tract at residues 1 to 319 (MKVSLPAFEK…RALSVNHGES (319 aa)) is ribokinase. 195–198 (NMGE) provides a ligand contact to ATP. The active site involves D264. A cytidylyltransferase region spans residues 345–476 (MTNGCFDILH…SIIENIMANQ (132 aa)).

It in the N-terminal section; belongs to the carbohydrate kinase PfkB family. In the C-terminal section; belongs to the cytidylyltransferase family. Homodimer.

The enzyme catalyses D-glycero-beta-D-manno-heptose 7-phosphate + ATP = D-glycero-beta-D-manno-heptose 1,7-bisphosphate + ADP + H(+). It carries out the reaction D-glycero-beta-D-manno-heptose 1-phosphate + ATP + H(+) = ADP-D-glycero-beta-D-manno-heptose + diphosphate. Its pathway is nucleotide-sugar biosynthesis; ADP-L-glycero-beta-D-manno-heptose biosynthesis; ADP-L-glycero-beta-D-manno-heptose from D-glycero-beta-D-manno-heptose 7-phosphate: step 1/4. It functions in the pathway nucleotide-sugar biosynthesis; ADP-L-glycero-beta-D-manno-heptose biosynthesis; ADP-L-glycero-beta-D-manno-heptose from D-glycero-beta-D-manno-heptose 7-phosphate: step 3/4. In terms of biological role, catalyzes the phosphorylation of D-glycero-D-manno-heptose 7-phosphate at the C-1 position to selectively form D-glycero-beta-D-manno-heptose-1,7-bisphosphate. Catalyzes the ADP transfer from ATP to D-glycero-beta-D-manno-heptose 1-phosphate, yielding ADP-D-glycero-beta-D-manno-heptose. In Shewanella sediminis (strain HAW-EB3), this protein is Bifunctional protein HldE.